The following is a 760-amino-acid chain: Xaa-Pro dipeptidyl-peptidase (760 aa).

Catalysis depends on charge relay system residues serine 349, aspartate 469, and histidine 499.

This sequence belongs to the peptidase S15 family. In terms of assembly, homodimer.

Its subcellular location is the cytoplasm. The catalysed reaction is Hydrolyzes Xaa-Pro-|- bonds to release unblocked, N-terminal dipeptides from substrates including Ala-Pro-|-p-nitroanilide and (sequentially) Tyr-Pro-|-Phe-Pro-|-Gly-Pro-|-Ile.. Functionally, removes N-terminal dipeptides sequentially from polypeptides having unsubstituted N-termini provided that the penultimate residue is proline. The polypeptide is Xaa-Pro dipeptidyl-peptidase (Streptococcus pyogenes serotype M3 (strain ATCC BAA-595 / MGAS315)).